Reading from the N-terminus, the 299-residue chain is GTP cyclohydrolase FolE2 (299 aa).

This sequence belongs to the GTP cyclohydrolase IV family.

The enzyme catalyses GTP + H2O = 7,8-dihydroneopterin 3'-triphosphate + formate + H(+). The protein operates within cofactor biosynthesis; 7,8-dihydroneopterin triphosphate biosynthesis; 7,8-dihydroneopterin triphosphate from GTP: step 1/1. Functionally, converts GTP to 7,8-dihydroneopterin triphosphate. The polypeptide is GTP cyclohydrolase FolE2 (Klebsiella pneumoniae).